A 146-amino-acid polypeptide reads, in one-letter code: Hemoglobin subunit beta-1 (146 aa).

Residues 2 to 146 (KWTDKERAVI…VVSALGKQYC (145 aa)) form the Globin domain. 2 residues coordinate heme b: His-63 and His-92.

The protein belongs to the globin family. As to quaternary structure, heterotetramer of two alpha chains and two beta chains. As to expression, red blood cells.

Functionally, involved in oxygen transport from gills to the various peripheral tissues. This chain is Hemoglobin subunit beta-1, found in Lycodes reticulatus (Arctic eelpout).